Here is a 689-residue protein sequence, read N- to C-terminus: Protein asunder (689 aa).

A coiled-coil region spans residues 521 to 550; the sequence is NGARLKLSKAKDQYRLLYRELEQLIQLNAT. Disordered regions lie at residues 591 to 619 and 665 to 689; these read SPER…SKRR and GTKD…SVRS. The span at 599-614 shows a compositional bias: low complexity; that stretch reads SSVGASGSSNSNSLLK. Positions 613-619 match the Nuclear localization signal (NLS) motif; the sequence is LKASKRR.

Belongs to the Integrator subunit 13 family. Belongs to the multiprotein complex Integrator, at least composed of IntS1, IntS2, IntS3, IntS4, omd/IntS5, IntS6, defl/IntS7, IntS8, IntS9, IntS10, IntS11, IntS12, asun/IntS13, IntS14 and IntS15. The core complex associates with protein phosphatase 2A subunits mts/PP2A and Pp2A-29B, to form the Integrator-PP2A (INTAC) complex. Post-translationally, phosphorylated.

The protein resides in the nucleus. It localises to the cytoplasm. Its subcellular location is the perinuclear region. Functionally, component of the integrator complex, a multiprotein complex that terminates RNA polymerase II (Pol II) transcription in the promoter-proximal region of genes. The integrator complex provides a quality checkpoint during transcription elongation by driving premature transcription termination of transcripts that are unfavorably configured for transcriptional elongation: the complex terminates transcription by (1) catalyzing dephosphorylation of the C-terminal domain (CTD) of Pol II subunit Polr2A/Rbp1 and Spt5, and (2) degrading the exiting nascent RNA transcript via endonuclease activity. The integrator complex is also involved in the 3'-end processing of the U7 snRNA, and also the spliceosomal snRNAs U1, U2, U4 and U5. In Drosophila sechellia (Fruit fly), this protein is Protein asunder (asun).